The sequence spans 255 residues: tRNA (guanine-N(1)-)-methyltransferase (255 aa).

S-adenosyl-L-methionine is bound by residues Gly-113 and 133–138 (IGDYVL).

This sequence belongs to the RNA methyltransferase TrmD family. In terms of assembly, homodimer.

The protein resides in the cytoplasm. The catalysed reaction is guanosine(37) in tRNA + S-adenosyl-L-methionine = N(1)-methylguanosine(37) in tRNA + S-adenosyl-L-homocysteine + H(+). In terms of biological role, specifically methylates guanosine-37 in various tRNAs. The polypeptide is tRNA (guanine-N(1)-)-methyltransferase (Escherichia coli O127:H6 (strain E2348/69 / EPEC)).